Reading from the N-terminus, the 769-residue chain is Major inner protein P1 (769 aa).

In terms of assembly, homodimer. Associates with the polymerase complex.

It is found in the virion. P1 is the major inner capsid (core) protein of the polyhedral procapsid, which is responsible for genomic replication and transcription. Forms a dodecahedral shell from 60 asymmetric dimers. Binds to RNA and may be involved in genomic packaging. This is Major inner protein P1 (P1) from Pseudomonas phage phi6 (Bacteriophage phi-6).